Here is a 452-residue protein sequence, read N- to C-terminus: Tubulin alpha-1 chain (452 aa).

Gln-11 is a binding site for GTP. N6-acetyllysine is present on Lys-40. GTP is bound by residues Glu-71, Gly-144, Thr-145, Thr-179, Asn-206, and Asn-228. Glu-71 is a Mg(2+) binding site. Glu-254 is an active-site residue. A disordered region spans residues 430–452 (KDYEEVGAESGDGDDDGLGEEEY). The segment covering 431 to 452 (DYEEVGAESGDGDDDGLGEEEY) has biased composition (acidic residues).

This sequence belongs to the tubulin family. As to quaternary structure, dimer of alpha and beta chains. A typical microtubule is a hollow water-filled tube with an outer diameter of 25 nm and an inner diameter of 15 nM. Alpha-beta heterodimers associate head-to-tail to form protofilaments running lengthwise along the microtubule wall with the beta-tubulin subunit facing the microtubule plus end conferring a structural polarity. Microtubules usually have 13 protofilaments but different protofilament numbers can be found in some organisms and specialized cells. Requires Mg(2+) as cofactor. In terms of processing, undergoes a tyrosination/detyrosination cycle, the cyclic removal and re-addition of a C-terminal tyrosine residue by the enzymes tubulin tyrosine carboxypeptidase (TTCP) and tubulin tyrosine ligase (TTL), respectively. Post-translationally, acetylation of alpha chains at Lys-40 stabilizes microtubules and affects affinity and processivity of microtubule motors. This modification has a role in multiple cellular functions, ranging from cell motility, cell cycle progression or cell differentiation to intracellular trafficking and signaling.

The protein localises to the cytoplasm. It is found in the cytoskeleton. It carries out the reaction GTP + H2O = GDP + phosphate + H(+). Its function is as follows. Tubulin is the major constituent of microtubules, a cylinder consisting of laterally associated linear protofilaments composed of alpha- and beta-tubulin heterodimers. Microtubules grow by the addition of GTP-tubulin dimers to the microtubule end, where a stabilizing cap forms. Below the cap, tubulin dimers are in GDP-bound state, owing to GTPase activity of alpha-tubulin. This chain is Tubulin alpha-1 chain (TUBA1), found in Pisum sativum (Garden pea).